The primary structure comprises 295 residues: Pyridoxal 5'-phosphate synthase subunit PdxS (295 aa).

Asp-25 contacts D-ribose 5-phosphate. The active-site Schiff-base intermediate with D-ribose 5-phosphate is the Lys-82. Position 154 (Gly-154) interacts with D-ribose 5-phosphate. Arg-166 contacts D-glyceraldehyde 3-phosphate. Residues Gly-215 and 236-237 (GS) each bind D-ribose 5-phosphate.

It belongs to the PdxS/SNZ family. As to quaternary structure, in the presence of PdxT, forms a dodecamer of heterodimers.

The catalysed reaction is aldehydo-D-ribose 5-phosphate + D-glyceraldehyde 3-phosphate + L-glutamine = pyridoxal 5'-phosphate + L-glutamate + phosphate + 3 H2O + H(+). It participates in cofactor biosynthesis; pyridoxal 5'-phosphate biosynthesis. Functionally, catalyzes the formation of pyridoxal 5'-phosphate from ribose 5-phosphate (RBP), glyceraldehyde 3-phosphate (G3P) and ammonia. The ammonia is provided by the PdxT subunit. Can also use ribulose 5-phosphate and dihydroxyacetone phosphate as substrates, resulting from enzyme-catalyzed isomerization of RBP and G3P, respectively. The polypeptide is Pyridoxal 5'-phosphate synthase subunit PdxS (Oceanobacillus iheyensis (strain DSM 14371 / CIP 107618 / JCM 11309 / KCTC 3954 / HTE831)).